A 185-amino-acid chain; its full sequence is Elongation factor P (185 aa).

It belongs to the elongation factor P family.

The protein resides in the cytoplasm. The protein operates within protein biosynthesis; polypeptide chain elongation. Involved in peptide bond synthesis. Stimulates efficient translation and peptide-bond synthesis on native or reconstituted 70S ribosomes in vitro. Probably functions indirectly by altering the affinity of the ribosome for aminoacyl-tRNA, thus increasing their reactivity as acceptors for peptidyl transferase. The chain is Elongation factor P from Synechococcus sp. (strain JA-3-3Ab) (Cyanobacteria bacterium Yellowstone A-Prime).